Consider the following 122-residue polypeptide: Large ribosomal subunit protein bL12 (122 aa).

This sequence belongs to the bacterial ribosomal protein bL12 family. As to quaternary structure, homodimer. Part of the ribosomal stalk of the 50S ribosomal subunit. Forms a multimeric L10(L12)X complex, where L10 forms an elongated spine to which 2 to 4 L12 dimers bind in a sequential fashion. Binds GTP-bound translation factors.

Its function is as follows. Forms part of the ribosomal stalk which helps the ribosome interact with GTP-bound translation factors. Is thus essential for accurate translation. This Bdellovibrio bacteriovorus (strain ATCC 15356 / DSM 50701 / NCIMB 9529 / HD100) protein is Large ribosomal subunit protein bL12.